Consider the following 601-residue polypeptide: Elongation factor 4 (601 aa).

The tr-type G domain maps to 7-189; sequence RNIRNFSIIA…AIVHRIPPPK (183 aa). Residues 19–24 and 136–139 contribute to the GTP site; these read DHGKST and NKID.

It belongs to the TRAFAC class translation factor GTPase superfamily. Classic translation factor GTPase family. LepA subfamily.

The protein resides in the cell inner membrane. It carries out the reaction GTP + H2O = GDP + phosphate + H(+). In terms of biological role, required for accurate and efficient protein synthesis under certain stress conditions. May act as a fidelity factor of the translation reaction, by catalyzing a one-codon backward translocation of tRNAs on improperly translocated ribosomes. Back-translocation proceeds from a post-translocation (POST) complex to a pre-translocation (PRE) complex, thus giving elongation factor G a second chance to translocate the tRNAs correctly. Binds to ribosomes in a GTP-dependent manner. The protein is Elongation factor 4 of Xanthomonas axonopodis pv. citri (strain 306).